Consider the following 497-residue polypeptide: Delayed-rectifier potassium channel regulatory subunit KCNS1 (497 aa).

The Cytoplasmic segment spans residues 1-186 (MVSEFPGPGS…LTMENPGYSL (186 aa)). A helical transmembrane segment spans residues 187-208 (PSKLFSCVSIGVVLASIAAMCI). Residues 209-239 (HSLPEYQAREAAAAVAAVAAGRSAEEVRDDP) lie on the Extracellular side of the membrane. Residues 240–262 (VLRRLEYFCIAWFSFEVSSRLLL) form a helical membrane-spanning segment. Topologically, residues 263-273 (APSTRNFFCHP) are cytoplasmic. The helical transmembrane segment at 274–291 (LNLIDIVSVLPFYLTLLA) threads the bilayer. The Extracellular segment spans residues 292–309 (GAALGDQRGASGEELGDL). A helical; Voltage-sensor transmembrane segment spans residues 310–330 (GKVVQVFRLMRIFRVLKLARH). At 331–345 (STGLRSLGATLKHSY) the chain is on the cytoplasmic side. The chain crosses the membrane as a helical span at residues 346–367 (REVGILLLYLAVGVSVFSGVAY). The Extracellular segment spans residues 368-379 (TAEEENEGFHTI). An intramembrane region (helical) is located at residues 380 to 391 (PACWWWGTVSMT). Residues 392–397 (TVGYGD) carry the Selectivity filter motif. An intramembrane segment occupies 392-399 (TVGYGDVV). Over 400–406 (PETVGGK) the chain is Extracellular. A helical membrane pass occupies residues 407 to 435 (LAASGCILGGILVVALPITIIFNKFSHFY). The Cytoplasmic segment spans residues 436-497 (RRQKALEAAV…PREPAKSHSY (62 aa)). The interval 464-497 (SDVSLETSRDTSQEGRSTDLETQAPREPAKSHSY) is disordered. The segment covering 470 to 482 (TSRDTSQEGRSTD) has biased composition (basic and acidic residues).

The protein belongs to the potassium channel family. S (TC 1.A.1.2) subfamily. Kv9.1/KCNS1 sub-subfamily. In terms of assembly, heterotetramer with KCNB1 and KCNB2. Does not form homomultimers. Detected in brain, but not in the other tissues tested. The highest levels of expression are in olfactory bulb, cerebral cortex, hippocampus, habenula, basolateral amygdaloid nuclei and cerebellum.

The protein resides in the cell membrane. Functionally, potassium channel regulatory subunit that modulate the delayed rectifier voltage-gated potassium channel activity of KCNB1 and KCNB2 by altering their kinetics, expression levels, and shifting the half-inactivation potential to more polarized values. While it does not form functional channels on its own, it can form functional heterotetrameric channels with KCNB1 and KCNB2. Each regulatory subunit has unique regulatory properties that can lead to extensive inhibition, significant changes in kinetics, and/or substantial shifts in the voltage dependencies of the inactivation process. In Mus musculus (Mouse), this protein is Delayed-rectifier potassium channel regulatory subunit KCNS1.